A 375-amino-acid polypeptide reads, in one-letter code: 23S rRNA (uracil(747)-C(5))-methyltransferase RlmC (375 aa).

Positions 3, 11, 14, and 87 each coordinate [4Fe-4S] cluster. The S-adenosyl-L-methionine site is built by glutamine 212, phenylalanine 241, glutamate 262, and asparagine 307. Residue cysteine 334 is the Nucleophile of the active site.

Belongs to the class I-like SAM-binding methyltransferase superfamily. RNA M5U methyltransferase family. RlmC subfamily.

It catalyses the reaction uridine(747) in 23S rRNA + S-adenosyl-L-methionine = 5-methyluridine(747) in 23S rRNA + S-adenosyl-L-homocysteine + H(+). Catalyzes the formation of 5-methyl-uridine at position 747 (m5U747) in 23S rRNA. The sequence is that of 23S rRNA (uracil(747)-C(5))-methyltransferase RlmC from Enterobacter sp. (strain 638).